The sequence spans 285 residues: GPN-loop GTPase 3 (285 aa).

13–18 lines the GTP pocket; the sequence is GSGKST. A Gly-Pro-Asn (GPN)-loop; involved in dimer interface motif is present at residues 70 to 72; sequence GPN. GTP is bound at residue 172-175; it reads TKID. Residues 253–276 are disordered; sequence GEDLEPKEPPLENDDDDDDDEGDE. A compositionally biased stretch (acidic residues) spans 263-275; it reads LENDDDDDDDEGD.

Belongs to the GPN-loop GTPase family. As to quaternary structure, heterodimer with gpn1. Binds to RNA polymerase II (RNAPII).

Its function is as follows. Small GTPase required for proper localization of RNA polymerase II (RNAPII). May act at an RNAP assembly step prior to nuclear import. The protein is GPN-loop GTPase 3 (gpn3) of Dictyostelium discoideum (Social amoeba).